The following is a 469-amino-acid chain: Cysteine--tRNA ligase (469 aa).

C28 is a Zn(2+) binding site. The 'HIGH' region signature appears at 30-40 (PTVYNYIHIGN). Positions 213, 238, and 242 each coordinate Zn(2+). Positions 270–274 (KMSKS) match the 'KMSKS' region motif. K273 contacts ATP.

The protein belongs to the class-I aminoacyl-tRNA synthetase family. As to quaternary structure, monomer. Zn(2+) is required as a cofactor.

The protein localises to the cytoplasm. It catalyses the reaction tRNA(Cys) + L-cysteine + ATP = L-cysteinyl-tRNA(Cys) + AMP + diphosphate. This chain is Cysteine--tRNA ligase, found in Leuconostoc citreum (strain KM20).